A 156-amino-acid chain; its full sequence is Small ribosomal subunit protein bS6 (156 aa).

The tract at residues 98–156 (GHDFRDQRSHHGQAGEFRKREPQQKSKEQSEFSKEKKSFSKSVTKKTVVSKPKETKEEK) is disordered. Over residues 113–135 (EFRKREPQQKSKEQSEFSKEKKS) the composition is skewed to basic and acidic residues. Positions 137–147 (SKSVTKKTVVS) are enriched in low complexity.

Belongs to the bacterial ribosomal protein bS6 family.

In terms of biological role, binds together with bS18 to 16S ribosomal RNA. The polypeptide is Small ribosomal subunit protein bS6 (Mycoplasmopsis synoviae (strain 53) (Mycoplasma synoviae)).